Reading from the N-terminus, the 237-residue chain is Oligoribonuclease, mitochondrial (237 aa).

Residues 1–25 (MLGGSLGSRLLRGVGGTRGQFRARG) constitute a mitochondrion transit peptide. Residues 43–207 (MVWVDLEMTG…DDISESIKEL (165 aa)) form the Exonuclease domain. The Mg(2+) site is built by Asp47 and Glu49. Ser92 is modified (phosphoserine). Tyr122 is subject to Phosphotyrosine. Position 147 (Asp147) interacts with Mg(2+). An N6-acetyllysine modification is found at Lys173. His194 is a catalytic residue. Residue Asp199 participates in Mg(2+) binding.

It belongs to the oligoribonuclease family. As to quaternary structure, homodimer. Homotetramer. Mn(2+) is required as a cofactor. Mg(2+) serves as cofactor.

The protein resides in the mitochondrion intermembrane space. The protein localises to the mitochondrion matrix. It localises to the mitochondrion. Its subcellular location is the cytoplasm. It is found in the nucleus. Functionally, 3'-to-5'exoribonuclease that preferentially degrades DNA and RNA oligonucleotides composed of only two nucleotides. Binds and degrades longer oligonucleotides with a lower affinity. Plays dual roles in mitochondria, scavenging nanoRNAs (small RNA oligonucleotides of &lt;5 nucleotides) that are produced by the degradosome and clearing short RNAs that are generated by RNA processing. Essential for correct initiation of mitochondrial transcription, degrading mitochondrial RNA dinucleotides to prevent RNA-primed transcription at non-canonical sites in the mitochondrial genome. Essential for embryonic development. The sequence is that of Oligoribonuclease, mitochondrial (REXO2) from Bos taurus (Bovine).